The following is a 218-amino-acid chain: Ras-related protein RABE1e (218 aa).

22–29 (GDSGVGKS) contacts GTP. Positions 44–52 (FITTIGIDF) match the Effector region motif. GTP contacts are provided by residues 70–74 (DTAGQ), 128–131 (NKAD), and 159–160 (SA). Residues 182–218 (TESDTKAEPQGIKITKQDANKASSSSTNEKSACCSYV) form a disordered region. The span at 201–211 (NKASSSSTNEK) shows a compositional bias: polar residues. Residues C214 and C215 are each lipidated (S-geranylgeranyl cysteine).

This sequence belongs to the small GTPase superfamily. Rab family. In terms of assembly, interacts with PI5K2.

Its subcellular location is the golgi apparatus membrane. The protein localises to the cell membrane. In terms of biological role, involved in membrane trafficking from the Golgi to the plasma membrane. This is Ras-related protein RABE1e (RABE1E) from Arabidopsis thaliana (Mouse-ear cress).